A 125-amino-acid chain; its full sequence is Glycine cleavage system H protein (125 aa).

Positions 23–103 (TALVGITDFA…PYNAWLIKMK (81 aa)) constitute a Lipoyl-binding domain. Position 64 is an N6-lipoyllysine (Lys-64).

This sequence belongs to the GcvH family. As to quaternary structure, the glycine cleavage system is composed of four proteins: P, T, L and H. (R)-lipoate serves as cofactor.

The glycine cleavage system catalyzes the degradation of glycine. The H protein shuttles the methylamine group of glycine from the P protein to the T protein. This Chlorobium chlorochromatii (strain CaD3) protein is Glycine cleavage system H protein.